Here is a 1024-residue protein sequence, read N- to C-terminus: Beta-galactosidase (1024 aa).

2 residues coordinate substrate: N103 and D202. Na(+) is bound at residue D202. Mg(2+) is bound by residues E417, H419, and E462. Substrate-binding positions include E462 and 538-541 (EYAH). The active-site Proton donor is E462. The Nucleophile role is filled by E538. N598 lines the Mg(2+) pocket. The Na(+) site is built by F602 and N605. Substrate-binding residues include N605 and W1000.

This sequence belongs to the glycosyl hydrolase 2 family. As to quaternary structure, homotetramer. Requires Mg(2+) as cofactor. Na(+) serves as cofactor.

It catalyses the reaction Hydrolysis of terminal non-reducing beta-D-galactose residues in beta-D-galactosides.. The protein is Beta-galactosidase of Escherichia coli O127:H6 (strain E2348/69 / EPEC).